The sequence spans 286 residues: Protein METABOLIC NETWORK MODULATOR 1 (286 aa).

Basic and acidic residues predominate over residues Met-1 to Asn-10. 3 disordered regions span residues Met-1–Ala-60, Val-123–Val-146, and Gly-181–Ser-204. The span at Lys-20–Gln-29 shows a compositional bias: basic residues. Residues Leu-30–Leu-39 show a composition bias toward basic and acidic residues. Positions Lys-131–Glu-140 are enriched in basic residues. The span at Pro-191 to Ser-204 shows a compositional bias: polar residues.

As to expression, mailny observed in young seedlings and in emerging leaves.

Its function is as follows. Lineage-specific modulator of primary metabolism. Influences flowering time. In Arabidopsis thaliana (Mouse-ear cress), this protein is Protein METABOLIC NETWORK MODULATOR 1.